A 406-amino-acid chain; its full sequence is UPF0754 membrane protein CYA_0973 (406 aa).

2 helical membrane passes run 1–21 and 385–405; these read MALW…YFTN and IVNL…LFLL.

It belongs to the UPF0754 family.

It localises to the cell inner membrane. This Synechococcus sp. (strain JA-3-3Ab) (Cyanobacteria bacterium Yellowstone A-Prime) protein is UPF0754 membrane protein CYA_0973.